The sequence spans 443 residues: Serine/threonine-protein phosphatase 2A 55 kDa regulatory subunit B beta isoform (443 aa).

4 WD repeats span residues 22-61 (TEAD…KNQV), 87-128 (EIEE…KRPE), 171-209 (AHTY…QSFN), and 220-260 (ELTE…CVTG). Ser-275 carries the post-translational modification Phosphoserine. 3 WD repeats span residues 279 to 317 (KLSS…RPIE), 334 to 375 (ENDC…DVTL), and 410 to 442 (DFSK…QDKV). Position 298 is a phosphothreonine (Thr-298).

It belongs to the phosphatase 2A regulatory subunit B family. As to quaternary structure, PP2A consists of a common heterodimeric core enzyme, composed of a 36 kDa catalytic subunit (subunit C) and a 65 kDa constant regulatory subunit (PR65 or subunit A), that associates with a variety of regulatory subunits. Proteins that associate with the core dimer include three families of regulatory subunits B (the R2/B/PR55/B55, R3/B''/PR72/PR130/PR59 and R5/B'/B56 families), the 48 kDa variable regulatory subunit, viral proteins, and cell signaling molecules. Interacts with TOMM22. Interacts with IER5 (via N- and C-terminal regions). As to expression, brain.

It is found in the cytoplasm. Its subcellular location is the cytoskeleton. The protein resides in the membrane. The B regulatory subunit might modulate substrate selectivity and catalytic activity, and might also direct the localization of the catalytic enzyme to a particular subcellular compartment. This Sus scrofa (Pig) protein is Serine/threonine-protein phosphatase 2A 55 kDa regulatory subunit B beta isoform (PPP2R2B).